The sequence spans 708 residues: Kin of IRRE-like protein 2 (708 aa).

Positions 1–20 (MLRMRVPALLVLLFCFRGRA) are cleaved as a signal peptide. Residues 21–510 (GPSPHFLQQP…GRRDLLPTVR (490 aa)) are Extracellular-facing. 5 Ig-like C2-type domains span residues 24 to 118 (PHFL…AQLH), 123 to 222 (PEAP…ITLS), 227 to 307 (PEVT…TALD), 312 to 394 (PILQ…ARLT), and 398 to 501 (PPVV…ASLG). A disulfide bridge links cysteine 45 with cysteine 103. Residue asparagine 143 is glycosylated (N-linked (GlcNAc...) asparagine). 2 cysteine pairs are disulfide-bonded: cysteine 146-cysteine 204 and cysteine 248-cysteine 291. The Cell attachment site signature appears at 149–151 (RGD). Residue asparagine 301 is glycosylated (N-linked (GlcNAc...) asparagine). 2 disulfides stabilise this stretch: cysteine 333–cysteine 375 and cysteine 419–cysteine 485. The N-linked (GlcNAc...) asparagine glycan is linked to asparagine 484. A helical membrane pass occupies residues 511–531 (IVAGVAAATTTLLMVITGVAL). The Cytoplasmic segment spans residues 532 to 708 (CCWRHSKASA…PSHPRLQTHV (177 aa)). The disordered stretch occupies residues 545–601 (EQKNLMRIPGSSDGSSSRGPEEEETGSREDRGPIVHTDHSDLVLEEEGTLETKDPTN). Positions 553 to 562 (PGSSDGSSSR) are enriched in low complexity. Residues 569–586 (TGSREDRGPIVHTDHSDL) show a composition bias toward basic and acidic residues. Serine 571 carries the phosphoserine modification. A phosphotyrosine mark is found at tyrosine 603, tyrosine 604, and tyrosine 661. A disordered region spans residues 684-708 (LAPGTPPFPYAAFPTPSHPRLQTHV).

It belongs to the immunoglobulin superfamily. In terms of assembly, homodimer. Interacts with NPHS2/podocin (via the C-terminus). Interacts with NPHS1 (via the Ig-like domains). Interacts with FYN. In terms of processing, N-glycosylated. Post-translationally, the extracellular domain is cleaved leading to the generation of a soluble fragment and a membrane-bound C-terminal fragment, which is further cleaved by gamma-secretase. Highly expressed in beta-cells of the pancreatic islets.

Its subcellular location is the cell membrane. May regulate basal insulin secretion. This chain is Kin of IRRE-like protein 2 (KIRREL2), found in Homo sapiens (Human).